We begin with the raw amino-acid sequence, 299 residues long: Bifunctional protein FolD (299 aa).

Residues 164–166 and I234 contribute to the NADP(+) site; that span reads GRS.

It belongs to the tetrahydrofolate dehydrogenase/cyclohydrolase family. Homodimer.

The enzyme catalyses (6R)-5,10-methylene-5,6,7,8-tetrahydrofolate + NADP(+) = (6R)-5,10-methenyltetrahydrofolate + NADPH. It catalyses the reaction (6R)-5,10-methenyltetrahydrofolate + H2O = (6R)-10-formyltetrahydrofolate + H(+). Its pathway is one-carbon metabolism; tetrahydrofolate interconversion. Functionally, catalyzes the oxidation of 5,10-methylenetetrahydrofolate to 5,10-methenyltetrahydrofolate and then the hydrolysis of 5,10-methenyltetrahydrofolate to 10-formyltetrahydrofolate. The sequence is that of Bifunctional protein FolD from Christiangramia forsetii (strain DSM 17595 / CGMCC 1.15422 / KT0803) (Gramella forsetii).